The following is a 426-amino-acid chain: Serine hydroxymethyltransferase (426 aa).

(6S)-5,6,7,8-tetrahydrofolate contacts are provided by residues Leu111 and 115 to 117 (GHL). Lys220 is modified (N6-(pyridoxal phosphate)lysine).

The protein belongs to the SHMT family. As to quaternary structure, homodimer. The cofactor is pyridoxal 5'-phosphate.

It is found in the cytoplasm. It catalyses the reaction (6R)-5,10-methylene-5,6,7,8-tetrahydrofolate + glycine + H2O = (6S)-5,6,7,8-tetrahydrofolate + L-serine. The protein operates within one-carbon metabolism; tetrahydrofolate interconversion. It functions in the pathway amino-acid biosynthesis; glycine biosynthesis; glycine from L-serine: step 1/1. Catalyzes the reversible interconversion of serine and glycine with tetrahydrofolate (THF) serving as the one-carbon carrier. This reaction serves as the major source of one-carbon groups required for the biosynthesis of purines, thymidylate, methionine, and other important biomolecules. Also exhibits THF-independent aldolase activity toward beta-hydroxyamino acids, producing glycine and aldehydes, via a retro-aldol mechanism. The chain is Serine hydroxymethyltransferase from Orientia tsutsugamushi (strain Ikeda) (Rickettsia tsutsugamushi).